The following is a 456-amino-acid chain: Exodeoxyribonuclease 7 large subunit (456 aa).

This sequence belongs to the XseA family. In terms of assembly, heterooligomer composed of large and small subunits.

It is found in the cytoplasm. The enzyme catalyses Exonucleolytic cleavage in either 5'- to 3'- or 3'- to 5'-direction to yield nucleoside 5'-phosphates.. Its function is as follows. Bidirectionally degrades single-stranded DNA into large acid-insoluble oligonucleotides, which are then degraded further into small acid-soluble oligonucleotides. In Lactobacillus delbrueckii subsp. bulgaricus (strain ATCC 11842 / DSM 20081 / BCRC 10696 / JCM 1002 / NBRC 13953 / NCIMB 11778 / NCTC 12712 / WDCM 00102 / Lb 14), this protein is Exodeoxyribonuclease 7 large subunit.